The chain runs to 229 residues: Demethylmenaquinone methyltransferase (229 aa).

S-adenosyl-L-methionine contacts are provided by residues threonine 57, aspartate 77, and 101 to 102 (DV).

Belongs to the class I-like SAM-binding methyltransferase superfamily. MenG/UbiE family.

The catalysed reaction is a 2-demethylmenaquinol + S-adenosyl-L-methionine = a menaquinol + S-adenosyl-L-homocysteine + H(+). It participates in quinol/quinone metabolism; menaquinone biosynthesis; menaquinol from 1,4-dihydroxy-2-naphthoate: step 2/2. In terms of biological role, methyltransferase required for the conversion of demethylmenaquinol (DMKH2) to menaquinol (MKH2). This is Demethylmenaquinone methyltransferase from Chlamydia trachomatis serovar A (strain ATCC VR-571B / DSM 19440 / HAR-13).